Here is a 252-residue protein sequence, read N- to C-terminus: 4-hydroxy-tetrahydrodipicolinate reductase (252 aa).

Residues 8 to 13 (GCCGKM), 84 to 86 (CST), and 108 to 111 (SANM) each bind NAD(+). Histidine 141 serves as the catalytic Proton donor/acceptor. (S)-2,3,4,5-tetrahydrodipicolinate is bound at residue histidine 142. Lysine 145 functions as the Proton donor in the catalytic mechanism. 151-152 (GT) contacts (S)-2,3,4,5-tetrahydrodipicolinate.

This sequence belongs to the DapB family.

It localises to the cytoplasm. It catalyses the reaction (S)-2,3,4,5-tetrahydrodipicolinate + NAD(+) + H2O = (2S,4S)-4-hydroxy-2,3,4,5-tetrahydrodipicolinate + NADH + H(+). The enzyme catalyses (S)-2,3,4,5-tetrahydrodipicolinate + NADP(+) + H2O = (2S,4S)-4-hydroxy-2,3,4,5-tetrahydrodipicolinate + NADPH + H(+). It participates in amino-acid biosynthesis; L-lysine biosynthesis via DAP pathway; (S)-tetrahydrodipicolinate from L-aspartate: step 4/4. Functionally, catalyzes the conversion of 4-hydroxy-tetrahydrodipicolinate (HTPA) to tetrahydrodipicolinate. The polypeptide is 4-hydroxy-tetrahydrodipicolinate reductase (Clostridium botulinum (strain Eklund 17B / Type B)).